Here is a 461-residue protein sequence, read N- to C-terminus: tRNA modification GTPase MnmE (461 aa).

(6S)-5-formyl-5,6,7,8-tetrahydrofolate contacts are provided by Arg-23, Glu-84, and Lys-123. The 164-residue stretch at Gly-219–Ala-382 folds into the TrmE-type G domain. Residues Asn-229 to Thr-234, Ser-248 to Thr-254, Asp-273 to Gly-276, and Asn-337 to Asp-340 contribute to the GTP site. Mg(2+) is bound by residues Ser-233 and Thr-254. A (6S)-5-formyl-5,6,7,8-tetrahydrofolate-binding site is contributed by Lys-461.

It belongs to the TRAFAC class TrmE-Era-EngA-EngB-Septin-like GTPase superfamily. TrmE GTPase family. As to quaternary structure, homodimer. Heterotetramer of two MnmE and two MnmG subunits. It depends on K(+) as a cofactor.

The protein localises to the cytoplasm. Functionally, exhibits a very high intrinsic GTPase hydrolysis rate. Involved in the addition of a carboxymethylaminomethyl (cmnm) group at the wobble position (U34) of certain tRNAs, forming tRNA-cmnm(5)s(2)U34. The protein is tRNA modification GTPase MnmE of Salinibacter ruber (strain DSM 13855 / M31).